We begin with the raw amino-acid sequence, 411 residues long: Argininosuccinate lyase (411 aa).

This sequence belongs to the lyase 1 family. Argininosuccinate lyase subfamily.

The protein resides in the cytoplasm. It carries out the reaction 2-(N(omega)-L-arginino)succinate = fumarate + L-arginine. Its pathway is amino-acid biosynthesis; L-arginine biosynthesis; L-arginine from L-ornithine and carbamoyl phosphate: step 3/3. The protein is Argininosuccinate lyase of Legionella pneumophila (strain Lens).